The sequence spans 100 residues: Integration host factor subunit alpha (100 aa).

The protein belongs to the bacterial histone-like protein family. In terms of assembly, heterodimer of an alpha and a beta chain.

Functionally, this protein is one of the two subunits of integration host factor, a specific DNA-binding protein that functions in genetic recombination as well as in transcriptional and translational control. This chain is Integration host factor subunit alpha, found in Phenylobacterium zucineum (strain HLK1).